Reading from the N-terminus, the 251-residue chain is UPF0309 protein SGR_3073 (251 aa).

The SIS domain maps to 36–221 (VADTVASGGR…EQLVARGIEP (186 aa)).

Belongs to the UPF0309 family.

The protein is UPF0309 protein SGR_3073 of Streptomyces griseus subsp. griseus (strain JCM 4626 / CBS 651.72 / NBRC 13350 / KCC S-0626 / ISP 5235).